Consider the following 160-residue polypeptide: uncharacterized protein (160 aa).

It localises to the plastid. This is an uncharacterized protein from Euglena longa (Euglenophycean alga).